Reading from the N-terminus, the 440-residue chain is Phosphoglycerate kinase, glycosomal (440 aa).

Residues Val23, Asp24, Phe25, Asn26, Arg39, Ser61, His62, Gly64, Arg65, Arg135, His171, and Arg172 each coordinate (2R)-3-phosphoglycerate. Position 217 (Gly217) interacts with CDP. An ADP-binding site is contributed by Ala218. Residues Ala218 and Lys219 each coordinate AMP. Ala218 is an ATP binding site. Ala218 is a binding site for Mg(2+). Lys219 contributes to the (2R)-3-phosphoglycerate binding site. Asp222 is a CDP binding site. A Mg(2+)-binding site is contributed by Asp222. ADP is bound by residues Lys223 and Gly241. Lys223 serves as a coordination point for AMP. Gly241 provides a ligand contact to CDP. The AMP site is built by Ala242 and Ala314. Positions 242 and 314 each coordinate ATP. The ADP site is built by Ala314 and Asn338. The CDP site is built by Gly339 and Phe344. Positions 344, 345, 377, and 378 each coordinate ADP. AMP is bound at residue Glu345. ATP is bound by residues Asp377 and Ser378. A Mg(2+)-binding site is contributed by Asp377.

The protein belongs to the phosphoglycerate kinase family. In terms of assembly, monomer. Mg(2+) serves as cofactor.

Its subcellular location is the glycosome. The enzyme catalyses (2R)-3-phosphoglycerate + ATP = (2R)-3-phospho-glyceroyl phosphate + ADP. It participates in carbohydrate degradation; glycolysis; pyruvate from D-glyceraldehyde 3-phosphate: step 2/5. The chain is Phosphoglycerate kinase, glycosomal from Trypanosoma brucei brucei.